A 346-amino-acid chain; its full sequence is Propane 2-monooxygenase, reductase component (346 aa).

Residues 5–94 (HKISFEPVDI…DCEIELLNFD (90 aa)) form the 2Fe-2S ferredoxin-type domain. 4 residues coordinate [2Fe-2S] cluster: Cys39, Cys44, Cys46, and Cys78. The FAD-binding FR-type domain maps to 104–205 (IQDVTTKVAA…NGPYGSCTLR (102 aa)).

The protein belongs to the bacterial ring-hydroxylating dioxygenase ferredoxin reductase family. In terms of assembly, the propane 2-monooxygenase multicomponent enzyme system is composed of an electron transfer component and a monooxygenase component interacting with the effector protein PrmD. The electron transfer component is composed of a reductase (PrmB), and the monooxygenase component is formed by a large subunit (PrmA) and a small subunit (PrmC). The cofactor is FAD. [2Fe-2S] cluster is required as a cofactor.

Its function is as follows. Reductase component of the propane 2-monooxygenase multicomponent enzyme system which is involved in the degradation of propane via the O2-dependent hydroxylation of propane. Reductase catalyzes the transfer of electrons from NADH or NADPH to monooxygenase. The chain is Propane 2-monooxygenase, reductase component from Gordonia sp. (strain TY-5).